Consider the following 404-residue polypeptide: Beta-ketoacyl-[acyl-carrier-protein] synthase III, chloroplastic (404 aa).

A chloroplast-targeting transit peptide spans 1 to 43 (MANASGFFTHPSIPNLRSRIHVPVRVSGSGFCVSNRFSKRVLC). Residues Cys179, His330, and Asn360 contribute to the active site.

Belongs to the thiolase-like superfamily. FabH family.

Its subcellular location is the plastid. It is found in the chloroplast. The enzyme catalyses malonyl-[ACP] + acetyl-CoA + H(+) = 3-oxobutanoyl-[ACP] + CO2 + CoA. The protein operates within lipid metabolism; fatty acid biosynthesis. In terms of biological role, catalyzes the condensation reaction of fatty acid synthesis by the addition to an acyl acceptor of two carbons from malonyl-ACP. KAS III catalyzes the first condensation reaction which initiates fatty acid synthesis and may therefore play a role in governing the total rate of fatty acid production. Possesses both acetoacetyl-ACP synthase and acetyl transacylase activities. The polypeptide is Beta-ketoacyl-[acyl-carrier-protein] synthase III, chloroplastic (Arabidopsis thaliana (Mouse-ear cress)).